A 113-amino-acid polypeptide reads, in one-letter code: U-scoloptoxin(16)-Sa1a (113 aa).

The signal sequence occupies residues Met1 to Ala29.

It belongs to the scoloptoxin-16 family. Contains 4 disulfide bonds. In terms of tissue distribution, expressed by the venom gland.

The protein resides in the secreted. This Scolopendra alternans (Florida Keys giant centipede) protein is U-scoloptoxin(16)-Sa1a.